The chain runs to 208 residues: dITP/XTP pyrophosphatase (208 aa).

A substrate-binding site is contributed by 11-16; sequence SRNWKK. The Proton acceptor role is filled by Asp76. Asp76 serves as a coordination point for Mg(2+). Substrate is bound by residues Ser77, 158-161, Lys184, and 189-190; these read FGYD and HR.

This sequence belongs to the HAM1 NTPase family. In terms of assembly, homodimer. Mg(2+) serves as cofactor.

The catalysed reaction is XTP + H2O = XMP + diphosphate + H(+). It carries out the reaction dITP + H2O = dIMP + diphosphate + H(+). It catalyses the reaction ITP + H2O = IMP + diphosphate + H(+). Its function is as follows. Pyrophosphatase that catalyzes the hydrolysis of nucleoside triphosphates to their monophosphate derivatives, with a high preference for the non-canonical purine nucleotides XTP (xanthosine triphosphate), dITP (deoxyinosine triphosphate) and ITP. Seems to function as a house-cleaning enzyme that removes non-canonical purine nucleotides from the nucleotide pool, thus preventing their incorporation into DNA/RNA and avoiding chromosomal lesions. This is dITP/XTP pyrophosphatase from Mycobacterium leprae (strain TN).